The chain runs to 314 residues: Olfactory receptor 5D13 (314 aa).

At 1 to 27 (MMASERNQSSTPTFILLGFSEYPEIQV) the chain is on the extracellular side. Asn7 carries an N-linked (GlcNAc...) asparagine glycan. Residues 28–48 (PLFLVFLFVYTVTVVGNLGMI) traverse the membrane as a helical segment. Topologically, residues 49–56 (IIIRLNSK) are cytoplasmic. A helical transmembrane segment spans residues 57-77 (LHTIMCFFLSHLSLTDFCFST). Over 78–101 (VVTPKLLENLVVEYRTISFSGCIM) the chain is Extracellular. The chain crosses the membrane as a helical span at residues 102-122 (QFCFACIFGVTETFMLAAMAY). Residues 123-141 (DRFVAVCKPLLYTTIMSQK) lie on the Cytoplasmic side of the membrane. Residues 142–162 (LCALLVAGSYTWGIVCSLILT) traverse the membrane as a helical segment. Residues 163–198 (YFLLDLSFCESTFINNFICDHSVIVSASYSDPYISQ) are Extracellular-facing. A helical transmembrane segment spans residues 199 to 219 (RLCFIIAIFNEVSSLIIILTS). At 220-239 (YMLIFTTIMKMRSASGRQKT) the chain is on the cytoplasmic side. Residues 240–260 (FSTCASHLTAITIFHGTILFL) traverse the membrane as a helical segment. At 261–273 (YCVPNPKTSSLIV) the chain is on the extracellular side. The chain crosses the membrane as a helical span at residues 274-294 (TVASVFYTVAIPMLNPLIYSL). Topologically, residues 295 to 314 (RNKDINNMFEKLVVTKLIYH) are cytoplasmic.

The protein belongs to the G-protein coupled receptor 1 family.

Its subcellular location is the cell membrane. Its function is as follows. Odorant receptor. This is Olfactory receptor 5D13 (OR5D13) from Homo sapiens (Human).